Reading from the N-terminus, the 101-residue chain is MSCCNPCLPCQPCGPTPLANSCNEPCVRQCQSSSVIIEPSSVVVILPGPILSSFPQNTVVGSSTSAAVGSILSCEGVPINSGGFDLSCITSRYCGSRCRPC.

At Ser-2 the chain carries N-acetylserine.

Belongs to the avian keratin family. The avian keratins (F-ker, S-ker, C-ker and B-ker) are a complex mixture of very similar polypeptides.

The sequence is that of Feather keratin Cos2-2 from Columba livia (Rock dove).